Reading from the N-terminus, the 291-residue chain is Release factor glutamine methyltransferase (291 aa).

Residues 127–131 (GTGSG), Asp150, Trp179, and Asn196 contribute to the S-adenosyl-L-methionine site. A substrate-binding site is contributed by 196–199 (NPPY).

It belongs to the protein N5-glutamine methyltransferase family. PrmC subfamily.

It catalyses the reaction L-glutaminyl-[peptide chain release factor] + S-adenosyl-L-methionine = N(5)-methyl-L-glutaminyl-[peptide chain release factor] + S-adenosyl-L-homocysteine + H(+). Methylates the class 1 translation termination release factors RF1/PrfA and RF2/PrfB on the glutamine residue of the universally conserved GGQ motif. The sequence is that of Release factor glutamine methyltransferase from Thermosynechococcus vestitus (strain NIES-2133 / IAM M-273 / BP-1).